We begin with the raw amino-acid sequence, 152 residues long: FAD synthase (152 aa).

Residues 16–17, 21–24, Asp101, and Tyr129 each bind ATP; these read TF and HPGH.

Belongs to the archaeal FAD synthase family. As to quaternary structure, homodimer. Requires a divalent metal cation as cofactor.

It carries out the reaction FMN + ATP + H(+) = FAD + diphosphate. It participates in cofactor biosynthesis; FAD biosynthesis; FAD from FMN: step 1/1. Catalyzes the transfer of the AMP portion of ATP to flavin mononucleotide (FMN) to produce flavin adenine dinucleotide (FAD) coenzyme. The protein is FAD synthase of Methanocaldococcus vulcanius (strain ATCC 700851 / DSM 12094 / M7) (Methanococcus vulcanius).